An 836-amino-acid polypeptide reads, in one-letter code: Protein O-mannosyl-transferase TMTC2 (836 aa).

A helical transmembrane segment spans residues 1-21 (MIAELVSSALGLALYLNTLSA). Residues 22 to 77 (DFCYDDSRAIKTNQDLLPETPWTHIFYNDFWGTLLTHSGSHKSYRPLCTLSFRLNH) lie on the Extracellular side of the membrane. The helical transmembrane segment at 78–98 (AIGGLNPWSYHLVNVLLHAAV) threads the bilayer. The Cytoplasmic portion of the chain corresponds to 99–107 (TGLFTRFSK). The chain crosses the membrane as a helical span at residues 108-128 (ALLGDGYWTFMAGLMFASHPI). Topologically, residues 129-132 (HTEA) are extracellular. Residues 133–153 (VAGIVGRADVGASLFFLLSLL) traverse the membrane as a helical segment. The Cytoplasmic segment spans residues 154–168 (CYIKHCSTRGYSART). The next 2 membrane-spanning stretches (helical) occupy residues 169-184 (WGWF…CSML) and 185-204 (WKEQ…VFVF). The Cytoplasmic segment spans residues 205–220 (HRLKMKQILPTIYKRK). The helical transmembrane segment at 221 to 241 (NLSLFLSISLLTFWGTCLLGA) threads the bilayer. Residues 242–312 (RLYWMGNKPP…KTVCDWRNLH (71 aa)) lie on the Extracellular side of the membrane. The chain crosses the membrane as a helical span at residues 313 to 333 (TVAFYSGLLLLAYCGLKNPSL). Residues 334-392 (EGECNGKALTNGKQNANGHSCHSDVEYRNSEMKPSFASKVENGIKNCVPQRTQLPSTEN) are Cytoplasmic-facing. A helical transmembrane segment spans residues 393–415 (IVILSLSLLIIPFIPATNLFFYV). Residues 416 to 422 (GFVIAER) lie on the Extracellular side of the membrane. Residues 423-443 (VLYIPSMGFCLLITVGARALY) form a helical membrane-spanning segment. The Cytoplasmic portion of the chain corresponds to 444–449 (VKVQKR). Residues 450–470 (FLKSLVFYATATLIVFYGVKT) form a helical membrane-spanning segment. Topologically, residues 471–836 (AIRNGDWQNE…EKQGLKTSKT (366 aa)) are extracellular. TPR repeat units follow at residues 493–526 (AKAW…RSNM), 527–560 (ADML…RPTL), 561–594 (ASAY…PDEN), 606–639 (TSCL…MPRH), 643–676 (QSLY…KTDH), 677–710 (IPAH…DPTK), 711–744 (GNCY…DNTE), 745–778 (FDVV…RPNY), and 779–812 (PAAL…KPDD).

This sequence belongs to the TMTC family.

Its subcellular location is the membrane. The protein localises to the endoplasmic reticulum. It carries out the reaction a di-trans,poly-cis-dolichyl beta-D-mannosyl phosphate + L-seryl-[protein] = 3-O-(alpha-D-mannosyl)-L-seryl-[protein] + a di-trans,poly-cis-dolichyl phosphate + H(+). The enzyme catalyses a di-trans,poly-cis-dolichyl beta-D-mannosyl phosphate + L-threonyl-[protein] = 3-O-(alpha-D-mannosyl)-L-threonyl-[protein] + a di-trans,poly-cis-dolichyl phosphate + H(+). It participates in protein modification; protein glycosylation. Its function is as follows. Transfers mannosyl residues to the hydroxyl group of serine or threonine residues. The 4 members of the TMTC family are O-mannosyl-transferases dedicated primarily to the cadherin superfamily, each member seems to have a distinct role in decorating the cadherin domains with O-linked mannose glycans at specific regions. Also acts as O-mannosyl-transferase on other proteins such as PDIA3. This chain is Protein O-mannosyl-transferase TMTC2, found in Mus musculus (Mouse).